The primary structure comprises 286 residues: Shikimate dehydrogenase (NADP(+)) (286 aa).

Shikimate-binding positions include 22 to 24 and T71; that span reads SRS. K75 functions as the Proton acceptor in the catalytic mechanism. NADP(+) is bound at residue E87. Shikimate-binding residues include N96 and D111. NADP(+)-binding positions include 136-140, 160-165, and I225; these read GAGGA and NRTVER. Position 227 (Y227) interacts with shikimate. G248 contributes to the NADP(+) binding site.

Belongs to the shikimate dehydrogenase family. Homodimer.

The enzyme catalyses shikimate + NADP(+) = 3-dehydroshikimate + NADPH + H(+). The protein operates within metabolic intermediate biosynthesis; chorismate biosynthesis; chorismate from D-erythrose 4-phosphate and phosphoenolpyruvate: step 4/7. Involved in the biosynthesis of the chorismate, which leads to the biosynthesis of aromatic amino acids. Catalyzes the reversible NADPH linked reduction of 3-dehydroshikimate (DHSA) to yield shikimate (SA). The polypeptide is Shikimate dehydrogenase (NADP(+)) (Rhizobium rhizogenes (strain K84 / ATCC BAA-868) (Agrobacterium radiobacter)).